Reading from the N-terminus, the 131-residue chain is Ribosome-binding factor A (131 aa).

The disordered stretch occupies residues 110-131 (QMNLGEDNEDNEDKENNDPGEE). A compositionally biased stretch (acidic residues) spans 115-131 (EDNEDNEDKENNDPGEE).

Belongs to the RbfA family. In terms of assembly, monomer. Binds 30S ribosomal subunits, but not 50S ribosomal subunits or 70S ribosomes.

It localises to the cytoplasm. Functionally, one of several proteins that assist in the late maturation steps of the functional core of the 30S ribosomal subunit. Associates with free 30S ribosomal subunits (but not with 30S subunits that are part of 70S ribosomes or polysomes). Required for efficient processing of 16S rRNA. May interact with the 5'-terminal helix region of 16S rRNA. This is Ribosome-binding factor A from Natranaerobius thermophilus (strain ATCC BAA-1301 / DSM 18059 / JW/NM-WN-LF).